The following is a 347-amino-acid chain: Circulating cathodic antigen (347 aa).

Residues 76 to 109 (ICLAAENKQLEQLKIENKTLRNSLDEHQTALDMI) adopt a coiled-coil conformation. The interval 149–177 (PGPKSVNTPSTNSIDSQSVSQKSNSGKVD) is disordered. The segment covering 153 to 174 (SVNTPSTNSIDSQSVSQKSNSG) has biased composition (polar residues). The stretch at 206 to 233 (DAYATELEEELHRLRSENAGLREILMIS) forms a coiled coil. The disordered stretch occupies residues 303–332 (LYNIPNPSDDSSNSGTISGNHSDEDSDEDD). The span at 307-316 (PNPSDDSSNS) shows a compositional bias: low complexity.

This sequence belongs to the SIKE family. O-glycosylated.

In terms of biological role, involved in protection of the schistosome gut. The chain is Circulating cathodic antigen from Schistosoma mansoni (Blood fluke).